We begin with the raw amino-acid sequence, 953 residues long: 26S proteasome non-ATPase regulatory subunit 1 (953 aa).

Met-1 is subject to N-acetylmethionine. Thr-273 is subject to Phosphothreonine. A disordered region spans residues Pro-279 to Pro-318. Residue Ser-290 is modified to Phosphoserine. A compositionally biased stretch (basic and acidic residues) spans Ser-290–Thr-303. At Lys-310 the chain carries N6-acetyllysine. At Thr-311 the chain carries Phosphothreonine. Ser-315 carries the phosphoserine modification. PC repeat units lie at residues Thr-403–Ala-436, Gly-441–Arg-474, Gly-476–Glu-510, Ala-511–Leu-545, Gly-547–Arg-580, Ser-581–Arg-616, Ala-617–Arg-649, Gly-651–Gln-685, Gly-686–Ala-726, and Gly-729–Val-761. N6-acetyllysine is present on Lys-720. The residue at position 830 (Thr-830) is a Phosphothreonine. Ser-834 is subject to Phosphoserine. 2 disordered regions span residues Ala-839–Pro-881 and Ala-930–Asp-953. Basic and acidic residues-rich tracts occupy residues Lys-842–Glu-852 and Ala-859–Glu-872. Acidic residues predominate over residues Glu-936 to Asp-953.

Belongs to the proteasome subunit S1 family. In terms of assembly, component of the 19S proteasome regulatory particle complex. The 26S proteasome consists of a 20S core particle (CP) and two 19S regulatory subunits (RP). The regulatory particle is made of a lid composed of 9 subunits, a base containing 6 ATPases and few additional components including PSMD1. Interacts with ADRM1. Interacts with ZFAND1.

In terms of biological role, component of the 26S proteasome, a multiprotein complex involved in the ATP-dependent degradation of ubiquitinated proteins. This complex plays a key role in the maintenance of protein homeostasis by removing misfolded or damaged proteins, which could impair cellular functions, and by removing proteins whose functions are no longer required. Therefore, the proteasome participates in numerous cellular processes, including cell cycle progression, apoptosis, or DNA damage repair. The sequence is that of 26S proteasome non-ATPase regulatory subunit 1 (PSMD1) from Homo sapiens (Human).